The sequence spans 297 residues: MDARLLQLPWRSLRIADCIFMGKVCFTESSYALLLSDLSSMWCEEAKADIIQDRARELNKRLKAPVSSFLSYLSQIVFPVLNSKDNGQNIFSCHRSEAELLLQVKSQLSGLPFYWSFHCKEATVSTVCRHLVRPLKSMTEALESQNQELCLLLKKKDAEIQEYQDSGAVLTRDRLKTEVFDELKFQKSFLAEKVQGLCMSGKAPGFSEQLQQLYDAVIAPKAPTHPKEEDTGNSASHRPMAESSSISFEKTVPTQERTEGGAVSEPSQVPQSSVSCLTHRPPAGASKPKKKAKGLFM.

The tract at residues M1 to L131 is globular head. The tract at residues P220–S286 is C-terminal tail. The segment at A222–M297 is disordered. Residues G232–Q255 show a composition bias toward polar residues. The segment covering V263–S286 has biased composition (low complexity). Residues K287–M297 carry the XLM motif. Basic residues predominate over residues K287 to M297.

This sequence belongs to the XRCC4-XLF family. XLF subfamily. As to quaternary structure, homodimer. Interacts with xrcc4; the interaction is direct and is mediated via a head-to-head interaction between N-terminal head regions. Component of the core long-range non-homologous end joining (NHEJ) complex (also named DNA-PK complex) composed of prkdc/DNA-PKcs, lig4, xrcc4, xrcc6/Ku70, xrcc5/Ku80 and nhej1/xlf.

The protein localises to the nucleus. In terms of biological role, DNA repair protein involved in DNA non-homologous end joining (NHEJ); required for double-strand break (DSB) repair and V(D)J recombination. It is also involved in telomere maintenance. Plays a key role in NHEJ by promoting the ligation of various mismatched and non-cohesive ends. In some studies, has been shown to associate with xrcc4 to form alternating helical filaments that bridge DNA and act like a bandage, holding together the broken DNA until it is repaired. Alternatively, it has also been shown that rather than forming filaments, a single nhej1 dimer interacts through both head domains with xrcc4 to promote the close alignment of DNA ends. The xrcc4-nhej1/xlf subcomplex binds to the DNA fragments of a DSB in a highly diffusive manner and robustly bridges two independent DNA molecules, holding the broken DNA fragments in close proximity to one other. The mobility of the bridges ensures that the ends remain accessible for further processing by other repair factors. This Xenopus laevis (African clawed frog) protein is Non-homologous end-joining factor 1.